Here is a 401-residue protein sequence, read N- to C-terminus: Chalcone synthase 5 (401 aa).

Cys-168 is a catalytic residue.

This sequence belongs to the thiolase-like superfamily. Chalcone/stilbene synthases family.

It catalyses the reaction (E)-4-coumaroyl-CoA + 3 malonyl-CoA + 3 H(+) = 2',4,4',6'-tetrahydroxychalcone + 3 CO2 + 4 CoA. Its pathway is secondary metabolite biosynthesis; flavonoid biosynthesis. In terms of biological role, the primary product of this enzyme is 4,2',4',6'-tetrahydroxychalcone (also termed naringenin-chalcone or chalcone) which can under specific conditions spontaneously isomerize into naringenin. This Sorghum bicolor (Sorghum) protein is Chalcone synthase 5 (CHS5).